The following is a 1076-amino-acid chain: Nickel and cobalt resistance protein CnrA (1076 aa).

Transmembrane regions (helical) follow at residues tryptophan 14–leucine 34, threonine 366–leucine 386, arginine 390–methionine 410, asparagine 418–valine 438, proline 475–glycine 495, serine 502–phenylalanine 522, proline 561–phenylalanine 581, arginine 903–isoleucine 923, leucine 928–leucine 948, alanine 959–alanine 979, arginine 1003–threonine 1023, and threonine 1035–leucine 1055.

It belongs to the resistance-nodulation-cell division (RND) (TC 2.A.6) family.

Its subcellular location is the cell inner membrane. Its function is as follows. The products of the genes cnrA, cnrB, and cnrC are likely to form a membrane-bound protein complex catalyzing an energy-dependent efflux of Ni(2+) and Co(2+). The mechanism of action of the CnrCBA complex may be that of a proton/cation antiporter. This is Nickel and cobalt resistance protein CnrA (cnrA) from Cupriavidus metallidurans (strain ATCC 43123 / DSM 2839 / NBRC 102507 / CH34) (Ralstonia metallidurans).